We begin with the raw amino-acid sequence, 409 residues long: 1-deoxy-D-xylulose 5-phosphate reductoisomerase (409 aa).

NADPH contacts are provided by Thr-10, Gly-11, Ser-12, Ile-13, Gly-36, Arg-37, Asn-38, and Asn-126. 1-deoxy-D-xylulose 5-phosphate is bound at residue Lys-127. Position 128 (Glu-128) interacts with NADPH. Asp-152 contacts Mn(2+). Residues Ser-153, Glu-154, Ser-190, and His-213 each coordinate 1-deoxy-D-xylulose 5-phosphate. Glu-154 is a Mn(2+) binding site. Gly-219 serves as a coordination point for NADPH. 4 residues coordinate 1-deoxy-D-xylulose 5-phosphate: Ser-226, Asn-231, Lys-232, and Glu-235. Glu-235 contacts Mn(2+).

The protein belongs to the DXR family. It depends on Mg(2+) as a cofactor. Mn(2+) is required as a cofactor.

It catalyses the reaction 2-C-methyl-D-erythritol 4-phosphate + NADP(+) = 1-deoxy-D-xylulose 5-phosphate + NADPH + H(+). It functions in the pathway isoprenoid biosynthesis; isopentenyl diphosphate biosynthesis via DXP pathway; isopentenyl diphosphate from 1-deoxy-D-xylulose 5-phosphate: step 1/6. Its function is as follows. Catalyzes the NADPH-dependent rearrangement and reduction of 1-deoxy-D-xylulose-5-phosphate (DXP) to 2-C-methyl-D-erythritol 4-phosphate (MEP). This is 1-deoxy-D-xylulose 5-phosphate reductoisomerase from Prochlorococcus marinus (strain MIT 9515).